Consider the following 1939-residue polypeptide: Myosin-6 (1939 aa).

Residues 32 to 81 (DIRTECFVPDDKEEFVKAKIVSREGGKVTAETENGKTVTVKEDQVMQQNP) form the Myosin N-terminal SH3-like domain. In terms of domain architecture, Myosin motor spans 85–780 (DKIEDMAMLT…LLGLLEEMRD (696 aa)). At Lys129 the chain carries N6,N6,N6-trimethyllysine. 178-185 (GESGAGKT) is an ATP binding site. Thr379 bears the Phosphothreonine mark. Ser417 is modified (phosphoserine). Actin-binding stretches follow at residues 657–679 (LNKL…IPNE) and 759–773 (KFGH…GLLG). One can recognise an IQ domain in the interval 783–812 (LSRIITRIQAQARGQLMRIEFKKMVERRDA). Residues 842–1939 (LKSAETEKEM…GAKQKMHDEE (1098 aa)) adopt a coiled-coil conformation. A phosphoserine mark is found at Ser1090 and Ser1139. The residue at position 1261 (Tyr1261) is a Phosphotyrosine. Ser1271 carries the post-translational modification Phosphoserine. Residues Thr1277 and Thr1284 each carry the phosphothreonine modification. Ser1309 is subject to Phosphoserine. Tyr1310 carries the post-translational modification Phosphotyrosine. Thr1311 is subject to Phosphothreonine. The residue at position 1512 (Ser1512) is a Phosphoserine. Phosphothreonine is present on residues Thr1515 and Thr1681. Positions 1908–1939 (AEERADIAESQVNKLRAKSRDIGAKQKMHDEE) are disordered. Residues 1925-1939 (KSRDIGAKQKMHDEE) are compositionally biased toward basic and acidic residues.

It belongs to the TRAFAC class myosin-kinesin ATPase superfamily. Myosin family. Muscle myosin is a hexameric protein that consists of 2 heavy chain subunits (MHC), 2 alkali light chain subunits (MLC) and 2 regulatory light chain subunits (MLC-2).

Its subcellular location is the cytoplasm. It is found in the myofibril. Muscle contraction. The polypeptide is Myosin-6 (MYH6) (Mesocricetus auratus (Golden hamster)).